Consider the following 199-residue polypeptide: GTP cyclohydrolase-2 (199 aa).

GTP is bound at residue 49 to 53 (RVHSE). Residues Cys-54, Cys-65, and Cys-67 each coordinate Zn(2+). GTP-binding positions include Gln-70, 92-94 (EGR), and Thr-114. The active-site Proton acceptor is the Asp-126. Arg-128 acts as the Nucleophile in catalysis. 2 residues coordinate GTP: Thr-149 and Lys-154.

The protein belongs to the GTP cyclohydrolase II family. Zn(2+) is required as a cofactor.

It carries out the reaction GTP + 4 H2O = 2,5-diamino-6-hydroxy-4-(5-phosphoribosylamino)-pyrimidine + formate + 2 phosphate + 3 H(+). The protein operates within cofactor biosynthesis; riboflavin biosynthesis; 5-amino-6-(D-ribitylamino)uracil from GTP: step 1/4. Functionally, catalyzes the conversion of GTP to 2,5-diamino-6-ribosylamino-4(3H)-pyrimidinone 5'-phosphate (DARP), formate and pyrophosphate. The chain is GTP cyclohydrolase-2 from Baumannia cicadellinicola subsp. Homalodisca coagulata.